Here is a 176-residue protein sequence, read N- to C-terminus: ATP-dependent protease subunit HslV (176 aa).

Residue Thr4 is part of the active site. The Na(+) site is built by Gly158, Cys161, and Thr164.

The protein belongs to the peptidase T1B family. HslV subfamily. A double ring-shaped homohexamer of HslV is capped on each side by a ring-shaped HslU homohexamer. The assembly of the HslU/HslV complex is dependent on binding of ATP.

It localises to the cytoplasm. It catalyses the reaction ATP-dependent cleavage of peptide bonds with broad specificity.. With respect to regulation, allosterically activated by HslU binding. Protease subunit of a proteasome-like degradation complex believed to be a general protein degrading machinery. This chain is ATP-dependent protease subunit HslV, found in Rhizobium meliloti (strain 1021) (Ensifer meliloti).